The sequence spans 458 residues: Transcription termination factor Rho (458 aa).

Positions 1–23 (MNTTNKESTAELNNTESNNNYNN) are disordered. The segment covering 10-23 (AELNNTESNNNYNN) has biased composition (low complexity). The 76-residue stretch at 78 to 153 (LIVGEGVLEV…LKVNRVNFED (76 aa)) folds into the Rho RNA-BD domain. Residues 201–206 (GKGQRA), 213–218 (RTGKTV), and Arg-244 contribute to the ATP site.

The protein belongs to the Rho family. In terms of assembly, homohexamer. The homohexamer assembles into an open ring structure.

In terms of biological role, facilitates transcription termination by a mechanism that involves Rho binding to the nascent RNA, activation of Rho's RNA-dependent ATPase activity, and release of the mRNA from the DNA template. This is Transcription termination factor Rho from Rickettsia conorii (strain ATCC VR-613 / Malish 7).